Reading from the N-terminus, the 87-residue chain is Large ribosomal subunit protein bL27 (87 aa).

It belongs to the bacterial ribosomal protein bL27 family.

This chain is Large ribosomal subunit protein bL27, found in Dichelobacter nodosus (strain VCS1703A).